Here is a 76-residue protein sequence, read N- to C-terminus: Bomanin Tailed 2 (76 aa).

The signal sequence occupies residues 1 to 22 (MKALQVAGTLMLLFCLLAAVNA). Positions 23-24 (TP) are cleaved as a propeptide — removed by a dipeptidylpeptidase. Cysteines 33 and 36 form a disulfide.

This sequence belongs to the bomanin family.

The protein resides in the secreted. In terms of biological role, secreted immune-induced peptide induced by Toll signaling. Has a role in resistance to bacterial and fungal infections. The strength of antimicrobial activity appears to correlate with the overall level of expression. The protein is Bomanin Tailed 2 of Drosophila melanogaster (Fruit fly).